Reading from the N-terminus, the 378-residue chain is Transcription factor YY2 (378 aa).

The interval leucine 39–glycine 113 is mediates transcriptional activation. A mediates transcriptional repression region spans residues glutamate 243–glutamine 378. C2H2-type zinc fingers lie at residues isoleucine 260 to histidine 284, histidine 289 to histidine 311, tyrosine 317 to histidine 341, and phenylalanine 347 to histidine 371.

The protein belongs to the YY transcription factor family. Weakly expressed by neuronal and glial cells in the cerebral cortex. Expressed by Purkinje cells and in the granular layers of the cerebellum. Expressed in all layers of spermatocytes in testis but not detected in sperm cells.

It is found in the nucleus. Functionally, functions as a multifunctional transcription factor that may exhibit positive and negative control on a large number of genes. May antagonize YY1 and function in development and differentiation. The chain is Transcription factor YY2 (Yy2) from Mus musculus (Mouse).